Consider the following 35-residue polypeptide: ACLGFGEKCNPSNDKCCKSSSLVCSQKHKWCKYGW.

Cystine bridges form between Cys2–Cys17, Cys9–Cys24, and Cys16–Cys31.

This sequence belongs to the neurotoxin 10 (Hwtx-1) family. 10 (haplotoxin-1) subfamily. In terms of tissue distribution, expressed by the venom gland.

The protein resides in the secreted. In terms of biological role, spider venom neurotoxin that blocks voltage-gated sodium channel Nav1.3/SCN3A in human (IC(50)=1 uM) and rat (IC(50)=1 uM). The sequence is that of Beta-theraphotoxin-Hlv1a from Cyriopagopus lividus (Cobalt blue tarantula).